A 196-amino-acid chain; its full sequence is MSITVYLLIVFAYLLGSVSSAIIFCRLAGLPDPRENGSHNPGATNVLRIGGKFSALGVLLFDILKGGLPVLLAFNFKLEPSEIGLIALAACLGHIFPLFFRFRGGKGVATAFGALLSISFAASAAGLCTWLIVFLLFGYSSLSAVITALIMPFYIWWFLPEFTFPVALVCCLLVYRHHDNIQRLWRGQEQPMWARK.

6 consecutive transmembrane segments (helical) span residues 5 to 25, 53 to 73, 80 to 100, 107 to 127, 130 to 150, and 153 to 173; these read VYLLIVFAYLLGSVSSAIIFC, FSALGVLLFDILKGGLPVLLA, PSEIGLIALAACLGHIFPLFF, GVATAFGALLSISFAASAAGL, WLIVFLLFGYSSLSAVITALI, and FYIWWFLPEFTFPVALVCCLL.

It belongs to the PlsY family. In terms of assembly, probably interacts with PlsX.

The protein resides in the cell inner membrane. It catalyses the reaction an acyl phosphate + sn-glycerol 3-phosphate = a 1-acyl-sn-glycero-3-phosphate + phosphate. The protein operates within lipid metabolism; phospholipid metabolism. Functionally, catalyzes the transfer of an acyl group from acyl-phosphate (acyl-PO(4)) to glycerol-3-phosphate (G3P) to form lysophosphatidic acid (LPA). This enzyme utilizes acyl-phosphate as fatty acyl donor, but not acyl-CoA or acyl-ACP. In Actinobacillus pleuropneumoniae serotype 7 (strain AP76), this protein is Glycerol-3-phosphate acyltransferase.